Consider the following 245-residue polypeptide: MYPVDLHMHTVASTHAYSTLHDYIAQARLKGIKLFAITDHGPDMADAPHYWHFVNMRIWPRLVDGVGILRGIEANIKNTDGEIDCTGPMLTSLDMIIAGFHEPVFPPQDKDTHTQAMIATIASGNVHIISHPGNPKFPIDIQAVAQAAAKHRVALEINNSSFTHSRMGSEANCRAVAAAVRDAGGMVALGSDSHTAFTLGEFTECRKVLDEVGFPEERILNVTPRRMLDFLESLGMPHIPEFADL.

Positions 7, 9, 15, 40, 73, 101, 131, 192, and 194 each coordinate Zn(2+).

This sequence belongs to the PHP family. In terms of assembly, homotrimer. Zn(2+) is required as a cofactor.

This is Probable phosphatase Ent638_1550 from Enterobacter sp. (strain 638).